A 583-amino-acid chain; its full sequence is Extracellular serine/threonine protein kinase four-jointed (583 aa).

The Cytoplasmic segment spans residues 1-78 (MYDIKRLEAG…RRRSLQRRAC (78 aa)). Residues 79-99 (LLSILAAFVFGMALGVVVPMF) traverse the membrane as a helical; Signal-anchor for type II membrane protein segment. At 100–583 (GLPRHQDSPP…LGQVQKCQGS (484 aa)) the chain is on the extracellular side. The tract at residues 179–222 (RTASGRYRKGPERRLSKKMPERVQPQETSRSPTTSPTNPTSEHQ) is disordered. Positions 187 to 199 (KGPERRLSKKMPE) are enriched in basic and acidic residues. Residues 206-219 (TSRSPTTSPTNPTS) show a composition bias toward low complexity. N-linked (GlcNAc...) asparagine glycans are attached at residues N310 and N379. Positions 384 to 421 (MQSERQAQSQPHGLLKRLGAASSPGSAHQSNAIEETGT) are disordered. N491 is a glycosylation site (N-linked (GlcNAc...) asparagine).

The protein belongs to the FJX1/FJ family. Proteolytically cleaved to yield a secreted protein. In terms of tissue distribution, in the eye disk, expressed in a gradient ahead of the morphogenetic furrow, high at the equator and low at the poles of the eye. In the leg disk, expressed in concentric rings, possibly corresponding to segmental boundaries. In the wing disk, expression is localized in the wing pouch; low in peripheral regions and high towards the center.

The protein resides in the golgi apparatus membrane. Its subcellular location is the secreted. The enzyme catalyses L-seryl-[protein] + ATP = O-phospho-L-seryl-[protein] + ADP + H(+). It catalyses the reaction L-threonyl-[protein] + ATP = O-phospho-L-threonyl-[protein] + ADP + H(+). In terms of biological role, golgi serine/threonine protein kinase required for intermediate growth in the proximal-distal axis. Phosphorylates specific residues within extracellular cadherin domains of Fat (ft) and Dachsous (ds) as they transit through the Golgi. Acts in ommatidial polarity determination as a secondary signal downstream of Notch, JAK/STAT and wingless. Also necessary for the initiation, up-regulation or maintenance of Notch ligand, Serrate (Ser) expression in legs, thereby participating in a feedback loop with N signaling. Sufficient for joint formation and growth in the leg. The sequence is that of Extracellular serine/threonine protein kinase four-jointed from Drosophila melanogaster (Fruit fly).